The sequence spans 201 residues: Pectinesterase inhibitor 7 (201 aa).

The signal sequence occupies residues 1 to 24 (MARNFELSLILFVLYLSTAAIVMA). 2 disulfides stabilise this stretch: Cys42/Cys51 and Cys108/Cys159.

It belongs to the PMEI family. In terms of assembly, binds reversibly to PME3 to inhibit its activity; the stability of the PME3-PMEI7 complex and the inhibition of the pectin methylesterase (PME) activity is pH-dependent, based on protonation status of amino-acids at the complex interface. As to expression, accumulates in etiolated hypocotyls (at protein level).

It localises to the secreted. The protein resides in the extracellular space. The protein localises to the apoplast. Its subcellular location is the cell wall. In terms of biological role, pectin methylesterase (PME) inhibitor that can target PME3 in a pH-dependent manner, mainly in slightly acidic conditions (pH 6.0 and 5.0) but not at pH 7.0; this processus relies on changes in the protonation of amino acids involved in intermolecular and intramolecular interactions. Regulates homogalacturonan methylesterification during plant development. This chain is Pectinesterase inhibitor 7, found in Arabidopsis thaliana (Mouse-ear cress).